The primary structure comprises 200 residues: MKKIVLATGNQGKVREMADLLSDFGFEVLAQSEFNVSEVAETGTTFIENAIIKARHAAQETGLPAIADDSGLEVDFLKGAPGIYSARYAGEKASDQENLEKLLAAMEGVPEAERTARFHCVLVLMRHENDPTPIVCHGKWEGRILTEAHGENGFGYDPIFFVPEDNCASAELEPARKKQLSHRGKALKSLFAQLSAQTAQ.

Position 8–13 (8–13) interacts with substrate; the sequence is TGNQGK. Asp-69 functions as the Proton acceptor in the catalytic mechanism. Asp-69 contacts Mg(2+). Substrate contacts are provided by residues Ser-70, 154-157, Lys-177, and 182-183; these read FGYD and HR.

Belongs to the HAM1 NTPase family. In terms of assembly, homodimer. Mg(2+) serves as cofactor.

It carries out the reaction XTP + H2O = XMP + diphosphate + H(+). It catalyses the reaction dITP + H2O = dIMP + diphosphate + H(+). The catalysed reaction is ITP + H2O = IMP + diphosphate + H(+). Pyrophosphatase that catalyzes the hydrolysis of nucleoside triphosphates to their monophosphate derivatives, with a high preference for the non-canonical purine nucleotides XTP (xanthosine triphosphate), dITP (deoxyinosine triphosphate) and ITP. Seems to function as a house-cleaning enzyme that removes non-canonical purine nucleotides from the nucleotide pool, thus preventing their incorporation into DNA/RNA and avoiding chromosomal lesions. This is dITP/XTP pyrophosphatase from Vibrio parahaemolyticus serotype O3:K6 (strain RIMD 2210633).